A 324-amino-acid chain; its full sequence is Olfactory receptor 6K2 (324 aa).

Topologically, residues Met1 to Val25 are extracellular. N-linked (GlcNAc...) asparagine glycosylation is present at Asn5. The chain crosses the membrane as a helical span at residues Val26–Ile46. Residues Thr47–His54 are Cytoplasmic-facing. A helical membrane pass occupies residues Leu55–Thr75. The Extracellular segment spans residues Ala76–Leu98. Residues Cys96 and Cys188 are joined by a disulfide bond. Residues Gln99 to Phe119 traverse the membrane as a helical segment. Residues Asp120 to Lys138 lie on the Cytoplasmic side of the membrane. Residues Leu139–Ile159 traverse the membrane as a helical segment. Residues Ala160 to Gln198 lie on the Extracellular side of the membrane. The helical transmembrane segment at Val199–Ser218 threads the bilayer. At Tyr219–Ala238 the chain is on the cytoplasmic side. The helical transmembrane segment at Phe239–Met259 threads the bilayer. Residues Tyr260–Asp272 lie on the Extracellular side of the membrane. A helical transmembrane segment spans residues Ile273–Leu293. Topologically, residues Arg294 to Phe324 are cytoplasmic.

It belongs to the G-protein coupled receptor 1 family.

It is found in the cell membrane. Odorant receptor. This chain is Olfactory receptor 6K2 (OR6K2), found in Homo sapiens (Human).